Reading from the N-terminus, the 340-residue chain is Pilin (340 aa).

A signal peptide spans Met1–Gly23. Cross-links (isoaspartyl lysine isopeptide (Lys-Asn)) lie at residues Lys36–Asn168 and Lys179–Asn303. Lys161 is covalently cross-linked (Threonyl lysine isopeptide (Lys-Thr) (interchain with T-311)). Positions Glu308–Gly312 match the EVPTG sorting signal motif. A Pentaglycyl murein peptidoglycan amidated threonine; alternate modification is found at Thr311. A Threonyl lysine isopeptide (Thr-Lys) (interchain with K-161); alternate cross-link involves residue Thr311. The propeptide at Gly312–Ala340 is removed by sortase C1.

The protein belongs to the Streptococcus pilin family. In terms of assembly, forms columns of about 3-nanometers in diameter of head-to-tail-assembled molecules. Proteolytically processed and assembled in pili through a transpeptidation reaction catalyzed by the sortase C1. The last pilin subunit is cross-linked to the peptidoglycan.

It is found in the secreted. It localises to the cell wall. The protein localises to the fimbrium. In terms of biological role, major component of the pilus. A stack of the pilin subunits, joined by intermolecular isopeptide bonds, forms the pilus. The pilus is required for bacterial adhesion to host cells, for bacterial aggregation, and for biofilm formation. This is Pilin from Streptococcus pyogenes serotype M1.